Here is a 412-residue protein sequence, read N- to C-terminus: Peptide chain release factor subunit 1 (412 aa).

This sequence belongs to the eukaryotic release factor 1 family. Heterodimer of two subunits, one of which binds GTP.

It localises to the cytoplasm. Directs the termination of nascent peptide synthesis (translation) in response to the termination codons UAA, UAG and UGA. The polypeptide is Peptide chain release factor subunit 1 (Methanobrevibacter smithii (strain ATCC 35061 / DSM 861 / OCM 144 / PS)).